Here is a 220-residue protein sequence, read N- to C-terminus: Endonuclease NucS (220 aa).

This sequence belongs to the NucS endonuclease family.

The protein localises to the cytoplasm. Functionally, cleaves both 3' and 5' ssDNA extremities of branched DNA structures. The polypeptide is Endonuclease NucS (Mycobacterium leprae (strain TN)).